The sequence spans 160 residues: Large ribosomal subunit protein uL22c (160 aa).

Belongs to the universal ribosomal protein uL22 family. As to quaternary structure, part of the 50S ribosomal subunit.

It is found in the plastid. Its subcellular location is the chloroplast. This protein binds specifically to 23S rRNA. Functionally, the globular domain of the protein is located near the polypeptide exit tunnel on the outside of the subunit, while an extended beta-hairpin is found that lines the wall of the exit tunnel in the center of the 70S ribosome. This Nasturtium officinale (Watercress) protein is Large ribosomal subunit protein uL22c (rpl22).